The following is a 309-amino-acid chain: L-arabinose 1-dehydrogenase (NAD(P)(+)) (309 aa).

NADP(+) contacts are provided by residues isoleucine 15 and 37 to 38; that span reads SR. Lysine 91 functions as the Proton donor in the catalytic mechanism. Aspartate 169 provides a ligand contact to NADP(+).

This sequence belongs to the Gfo/Idh/MocA family. As to quaternary structure, monomer.

It carries out the reaction alpha-L-arabinopyanose + NAD(+) = L-arabinono-1,4-lactone + NADH + H(+). It catalyses the reaction alpha-L-arabinopyanose + NADP(+) = L-arabinono-1,4-lactone + NADPH + H(+). The catalysed reaction is D-galactose + NAD(+) = D-galactono-1,4-lactone + NADH + H(+). The enzyme catalyses D-galactose + NADP(+) = D-galactono-1,5-lactone + NADPH + H(+). It participates in carbohydrate degradation; L-arabinose degradation via L-arabinono-1,4-lactone pathway. Functionally, catalyzes the NAD(P)(+)-dependent conversion of L-arabinose to L-arabino-gamma-lactone. Is involved in a degradation pathway of L-arabinose that allows A.brasilense to grow on L-arabinose as a sole carbon source. Prefers NADP(+) to NAD(+) as electron acceptor. Displays high catalytic efficiency for both L-arabinose and D-galactose in vitro. However, the enzyme appears to be involved in the metabolism of L-arabinose but not D-galactose in vivo. To a lesser extent, is also active on D-talose and D-xylose as substrates in vitro, but not with D-arabinose, D-glucose, D-ribose, L-xylose, L-mannose, L-lyxose, and D-fructose. The polypeptide is L-arabinose 1-dehydrogenase (NAD(P)(+)) (araA) (Azospirillum brasilense).